The chain runs to 873 residues: MKILKTLTLRGPNYWSIRRKKLIVMRLDLEDLAERPSNSIPGFYEGLIRVLPSLVEHFCSPGHRGGFLARVREGTYMGHIVEHVALELQELVGMTAGFGRTRETSTPGIYNVVYEYVDEQAGRYAGRAAVRLCRSLVDTGDYSLTELEKDLEDLRDLGANSALGPSTETIVTEADARKIPWMLLSARAMVQLGYGVHQQRIQATLSSHSGILGVELACDKEGTKTILQDAGIPVPRGTTIQYFDDLEEAINDVGGYPVVIKPLDGNHGRGITINVRHWEEAIAAYDLAAEESKSRSIIVERYYEGSDHRVLVVNGKLVAVAERIPAHVTGDGTSTITELIDKTNQDPNRGDGHANILTKIVVNKTAIDVMERQGYNLDSVLPKDEVVYLRATANLSTGGIAIDRTDDIHPENIWLMERVAKVIGLDIAGIDVVTSDISKPLRETNGVIVEVNAAPGFRMHVAPSQGLPRNVAAPVLDMLFPSGTPSRIPILAVTGTNGKTTTTRLLAHIYRQTGKTVGYTSTDAIYINEYCVEKGDNTGPQSAAVILRDPTVEVAVLETARGGILRAGLAFDTCDVGVVLNVAADHLGLGDIDTIEQMAKVKSVIAEVVDPSGYAVLNADDPLVAAMADKVKAKVAYFSMNPDNPVIQNHIRRNGIAAVYESGYVSILEGSWTLRVEEATLIPMTMGGMAPFMIANALAACLAAFVNGLDVEVIRQGVRTFTTSAEQTPGRMNLFNLGRYHALVDYAHNPAGYRAVGDFVKNWHGQRFGVVGGPGDRRDSDLIELGQIAAQVFDRIIVKEDDDKRGRSGGETADLIVKGILQENPGAAYEVILDETVALNKALDQVEEKGLVVVFPESVSKAIELIKARKPIG.

One can recognise an ATP-grasp domain in the interval 224–480 (KTILQDAGIP…VAAPVLDMLF (257 aa)). ATP is bound at residue 495–501 (GTNGKTT).

In the C-terminal section; belongs to the MurCDEF family. Homodimer.

The catalysed reaction is [L-4-(L-arginin-2-N-yl)aspartate](n) + L-aspartate + ATP = [L-4-(L-arginin-2-N-yl)aspartate](n)-L-aspartate + ADP + phosphate + H(+). It catalyses the reaction [L-4-(L-arginin-2-N-yl)aspartate](n)-L-aspartate + L-arginine + ATP = [L-4-(L-arginin-2-N-yl)aspartate](n+1) + ADP + phosphate + H(+). Functionally, catalyzes the ATP-dependent polymerization of arginine and aspartate to multi-L-arginyl-poly-L-aspartic acid (cyanophycin; a water-insoluble reserve polymer). The polypeptide is Cyanophycin synthetase (cphA) (Synechocystis sp. (strain ATCC 27184 / PCC 6803 / Kazusa)).